The chain runs to 323 residues: Ubiquinone biosynthesis protein COQ4, mitochondrial (323 aa).

The N-terminal 29 residues, 1–29, are a transit peptide targeting the mitochondrion; that stretch reads MLKSTVSNTRIKCCRIDQRRNYLFTALAS. Histidine 205, aspartate 206, histidine 209, and glutamate 221 together coordinate Zn(2+).

This sequence belongs to the COQ4 family. Component of a multi-subunit COQ enzyme complex, composed of at least COQ3, COQ4, COQ5, COQ6, COQ7 and COQ9. Zn(2+) is required as a cofactor.

Its subcellular location is the mitochondrion inner membrane. The enzyme catalyses a 4-hydroxy-3-methoxy-5-(all-trans-polyprenyl)benzoate + H(+) = a 2-methoxy-6-(all-trans-polyprenyl)phenol + CO2. The protein operates within cofactor biosynthesis; ubiquinone biosynthesis. Lyase that catalyzes the C1-decarboxylation of 4-hydroxy-3-methoxy-5-(all-trans-polyprenyl)benzoic acid into 2-methoxy-6-(all-trans-polyprenyl)phenol during ubiquinone biosynthesis. The chain is Ubiquinone biosynthesis protein COQ4, mitochondrial from Candida dubliniensis (strain CD36 / ATCC MYA-646 / CBS 7987 / NCPF 3949 / NRRL Y-17841) (Yeast).